Reading from the N-terminus, the 104-residue chain is Proteasome subunit beta type-8 (104 aa).

The protein belongs to the peptidase T1B family. The 26S proteasome consists of a 20S proteasome core and two 19S regulatory subunits. The 20S proteasome core is composed of 28 subunits that are arranged in four stacked rings, resulting in a barrel-shaped structure. The two end rings are each formed by seven alpha subunits, and the two central rings are each formed by seven beta subunits. The catalytic chamber with the active sites is on the inside of the barrel. Component of the immunoproteasome, where it displaces the equivalent housekeeping subunit PSMB5. Component of the spermatoproteasome, a form of the proteasome specifically found in testis. Directly interacts with POMP.

Its subcellular location is the cytoplasm. The protein resides in the nucleus. It carries out the reaction Cleavage of peptide bonds with very broad specificity.. The proteasome is a multicatalytic proteinase complex which is characterized by its ability to cleave peptides with Arg, Phe, Tyr, Leu, and Glu adjacent to the leaving group at neutral or slightly basic pH. The proteasome has an ATP-dependent proteolytic activity. This subunit is involved in antigen processing to generate class I binding peptides. May participate in the generation of spliced peptides resulting from the ligation of two separate proteasomal cleavage products that are not contiguous in the parental protein. Required for adipocyte differentiation. The polypeptide is Proteasome subunit beta type-8 (PSMB8) (Sus scrofa (Pig)).